Consider the following 407-residue polypeptide: MSYPDDYSTDVEKNKMDLKEFKEKTQIAELESKVLRLELKNKDISRENVQIKKENEILKRELDKLRIPPLILGTILDRVNERKAVVKSSTGPNFLVNLSQFVDPEDIVPGARVCLNQQTLAIVEVLPKEKDYRAMAMEIEEKPDISFEDIGGLNNQIRDIKEVVELPLKNPELFEKVGIVPPKGVLLYGPPGTGKTLLAKAVAYETNASFVRVVGSELVKKFIGEGAKLVRDVFKLAKEKSPCIIFIDEIDAVASKRTESLTGGDREVQRTLMQLLAEMDGFDSRGDVKIIAATNRPDILDPAILRPGRFDRIIEISMPDEDGRLDILKIHTEKMNLKGVDLREVAKLAENMVGADLKAVCTEAGMFAIREEREFIKMDDFKEAISKITGKKEKCSYDMPQLTVMYG.

Residues 22–67 (KEKTQIAELESKVLRLELKNKDISRENVQIKKENEILKRELDKLRI) are a coiled coil. ATP-binding positions include 192–197 (GTGKTL) and His331. The segment at 405–407 (MYG) is docks into pockets in the proteasome alpha-ring to cause gate opening.

It belongs to the AAA ATPase family. Homohexamer. The hexameric complex has a two-ring architecture resembling a top hat that caps the 20S proteasome core at one or both ends. Upon ATP-binding, the C-terminus of PAN interacts with the alpha-rings of the proteasome core by binding to the intersubunit pockets.

Its subcellular location is the cytoplasm. Its function is as follows. ATPase which is responsible for recognizing, binding, unfolding and translocation of substrate proteins into the archaeal 20S proteasome core particle. Is essential for opening the gate of the 20S proteasome via an interaction with its C-terminus, thereby allowing substrate entry and access to the site of proteolysis. Thus, the C-termini of the proteasomal ATPase function like a 'key in a lock' to induce gate opening and therefore regulate proteolysis. Unfolding activity requires energy from ATP hydrolysis, whereas ATP binding alone promotes ATPase-20S proteasome association which triggers gate opening, and supports translocation of unfolded substrates. The polypeptide is Proteasome-activating nucleotidase (Methanococcus maripaludis (strain C6 / ATCC BAA-1332)).